The sequence spans 256 residues: Ribonuclease HII (256 aa).

The region spanning 72–256 is the RNase H type-2 domain; that stretch reads QYVAGIDEVG…TFRPVPDYVN (185 aa). 3 residues coordinate a divalent metal cation: Asp-78, Glu-79, and Asp-170.

The protein belongs to the RNase HII family. Mn(2+) serves as cofactor. It depends on Mg(2+) as a cofactor.

It localises to the cytoplasm. It catalyses the reaction Endonucleolytic cleavage to 5'-phosphomonoester.. Endonuclease that specifically degrades the RNA of RNA-DNA hybrids. The protein is Ribonuclease HII of Limosilactobacillus fermentum (strain NBRC 3956 / LMG 18251) (Lactobacillus fermentum).